A 61-amino-acid chain; its full sequence is Small ribosomal subunit protein uS14 (61 aa).

Zn(2+) is bound by residues C24, C27, C40, and C43.

It belongs to the universal ribosomal protein uS14 family. Zinc-binding uS14 subfamily. As to quaternary structure, part of the 30S ribosomal subunit. Contacts proteins S3 and S10. Requires Zn(2+) as cofactor.

Binds 16S rRNA, required for the assembly of 30S particles and may also be responsible for determining the conformation of the 16S rRNA at the A site. The chain is Small ribosomal subunit protein uS14 from Mycoplasma mobile (strain ATCC 43663 / 163K / NCTC 11711) (Mesomycoplasma mobile).